The primary structure comprises 208 residues: ATP-dependent Clp protease proteolytic subunit 1 (208 aa).

Catalysis depends on Ser108, which acts as the Nucleophile. Residue His133 is part of the active site.

This sequence belongs to the peptidase S14 family. Fourteen ClpP subunits assemble into 2 heptameric rings which stack back to back to give a disk-like structure with a central cavity, resembling the structure of eukaryotic proteasomes.

It is found in the cytoplasm. The enzyme catalyses Hydrolysis of proteins to small peptides in the presence of ATP and magnesium. alpha-casein is the usual test substrate. In the absence of ATP, only oligopeptides shorter than five residues are hydrolyzed (such as succinyl-Leu-Tyr-|-NHMec, and Leu-Tyr-Leu-|-Tyr-Trp, in which cleavage of the -Tyr-|-Leu- and -Tyr-|-Trp bonds also occurs).. Cleaves peptides in various proteins in a process that requires ATP hydrolysis. Has a chymotrypsin-like activity. Plays a major role in the degradation of misfolded proteins. The sequence is that of ATP-dependent Clp protease proteolytic subunit 1 from Corynebacterium glutamicum (strain ATCC 13032 / DSM 20300 / JCM 1318 / BCRC 11384 / CCUG 27702 / LMG 3730 / NBRC 12168 / NCIMB 10025 / NRRL B-2784 / 534).